Here is a 124-residue protein sequence, read N- to C-terminus: Glycine cleavage system H protein (124 aa).

The Lipoyl-binding domain occupies 22 to 103; that stretch reads VFVVGITDNA…AYTAWIFKIK (82 aa). At Lys63 the chain carries N6-lipoyllysine.

This sequence belongs to the GcvH family. As to quaternary structure, the glycine cleavage system is composed of four proteins: P, T, L and H. It depends on (R)-lipoate as a cofactor.

Functionally, the glycine cleavage system catalyzes the degradation of glycine. The H protein shuttles the methylamine group of glycine from the P protein to the T protein. This chain is Glycine cleavage system H protein, found in Bordetella pertussis (strain Tohama I / ATCC BAA-589 / NCTC 13251).